We begin with the raw amino-acid sequence, 418 residues long: NADH-quinone oxidoreductase subunit D (418 aa).

This sequence belongs to the complex I 49 kDa subunit family. NDH-1 is composed of 14 different subunits. Subunits NuoB, C, D, E, F, and G constitute the peripheral sector of the complex.

It is found in the cell inner membrane. The enzyme catalyses a quinone + NADH + 5 H(+)(in) = a quinol + NAD(+) + 4 H(+)(out). NDH-1 shuttles electrons from NADH, via FMN and iron-sulfur (Fe-S) centers, to quinones in the respiratory chain. The immediate electron acceptor for the enzyme in this species is believed to be ubiquinone. Couples the redox reaction to proton translocation (for every two electrons transferred, four hydrogen ions are translocated across the cytoplasmic membrane), and thus conserves the redox energy in a proton gradient. The chain is NADH-quinone oxidoreductase subunit D from Neisseria meningitidis serogroup C / serotype 2a (strain ATCC 700532 / DSM 15464 / FAM18).